Reading from the N-terminus, the 375-residue chain is CCA-adding enzyme (375 aa).

ATP-binding residues include glycine 8 and arginine 11. Residues glycine 8 and arginine 11 each coordinate CTP. Aspartate 21 and aspartate 23 together coordinate Mg(2+). ATP-binding residues include arginine 91, arginine 137, and arginine 140. Residues arginine 91, arginine 137, and arginine 140 each coordinate CTP.

Belongs to the tRNA nucleotidyltransferase/poly(A) polymerase family. Bacterial CCA-adding enzyme type 2 subfamily. It depends on Mg(2+) as a cofactor.

It carries out the reaction a tRNA precursor + 2 CTP + ATP = a tRNA with a 3' CCA end + 3 diphosphate. The enzyme catalyses a tRNA with a 3' CCA end + 2 CTP + ATP = a tRNA with a 3' CCACCA end + 3 diphosphate. Its function is as follows. Catalyzes the addition and repair of the essential 3'-terminal CCA sequence in tRNAs without using a nucleic acid template. Adds these three nucleotides in the order of C, C, and A to the tRNA nucleotide-73, using CTP and ATP as substrates and producing inorganic pyrophosphate. tRNA 3'-terminal CCA addition is required both for tRNA processing and repair. Also involved in tRNA surveillance by mediating tandem CCA addition to generate a CCACCA at the 3' terminus of unstable tRNAs. While stable tRNAs receive only 3'-terminal CCA, unstable tRNAs are marked with CCACCA and rapidly degraded. The sequence is that of CCA-adding enzyme from Pseudomonas entomophila (strain L48).